A 70-amino-acid polypeptide reads, in one-letter code: Large ribosomal subunit protein bL31 (70 aa).

Zn(2+) contacts are provided by Cys16, Cys18, Cys37, and Cys40.

Belongs to the bacterial ribosomal protein bL31 family. Type A subfamily. In terms of assembly, part of the 50S ribosomal subunit. Zn(2+) serves as cofactor.

Functionally, binds the 23S rRNA. In Shewanella amazonensis (strain ATCC BAA-1098 / SB2B), this protein is Large ribosomal subunit protein bL31.